Consider the following 344-residue polypeptide: Meiotic recombination protein DMC1 homolog B (344 aa).

Residue 133–140 (GEFRSGKT) participates in ATP binding. Position 235 (arginine 235) interacts with dsDNA. SsDNA-binding residues include arginine 235, phenylalanine 238, arginine 241, arginine 247, and arginine 315. DsDNA is bound by residues arginine 241 and arginine 247.

This sequence belongs to the RecA family. DMC1 subfamily. Highly expressed in spikelets. Expressed in meiotic young panicles.

It localises to the nucleus. In terms of biological role, recombinase that may participate in meiotic recombination, specifically in homologous strand assimilation, which is required for the resolution of meiotic double-strand breaks. Exhibits DNA-dependent ATPase activity when bound to single-stranded DNA (ssDNA). Mediates renaturation of homologous complementary strands as well as assimilation of single strands into homologous supercoiled duplexes leading to D-loop formation. Binds circular single-stranded DNA (ssDNA) and circular double-stranded DNA (dsDNA) in vitro. Catalyzes DNA homologous renaturation and DNA strand exchange. The rates of these activities are dependent on the state of ATP hydrolysis. Forms helical filaments along ssDNA and dsDNA, and promotes strand exchange between ssDNA and dsDNA with long DNA substrates of several thousand base pairs. The presence of the replication protein A is not required for this activity. Seems to be required for homologous pairing and subsequent chromosome segregation during male meiosis. May be not directly required for homologous pairing during male meiosis. Required for synaptonemal complex assembly and crossover formation. Functions redundantly with DMC1A. In Oryza sativa subsp. japonica (Rice), this protein is Meiotic recombination protein DMC1 homolog B.